A 547-amino-acid chain; its full sequence is Chaperonin GroEL (547 aa).

ATP is bound by residues 30 to 33, K51, 87 to 91, G415, and D495; these read TLGP and DGTTT. Residues 526-547 form a disordered region; that stretch reads KKDTPVPPMPGGGMGGMGGMDF. Over residues 536-547 the composition is skewed to gly residues; it reads GGGMGGMGGMDF.

The protein belongs to the chaperonin (HSP60) family. In terms of assembly, forms a cylinder of 14 subunits composed of two heptameric rings stacked back-to-back. Interacts with the co-chaperonin GroES.

It is found in the cytoplasm. The catalysed reaction is ATP + H2O + a folded polypeptide = ADP + phosphate + an unfolded polypeptide.. Functionally, together with its co-chaperonin GroES, plays an essential role in assisting protein folding. The GroEL-GroES system forms a nano-cage that allows encapsulation of the non-native substrate proteins and provides a physical environment optimized to promote and accelerate protein folding. This is Chaperonin GroEL from Bartonella henselae (strain ATCC 49882 / DSM 28221 / CCUG 30454 / Houston 1) (Rochalimaea henselae).